Reading from the N-terminus, the 262-residue chain is Indole-3-glycerol phosphate synthase (262 aa).

This sequence belongs to the TrpC family.

The catalysed reaction is 1-(2-carboxyphenylamino)-1-deoxy-D-ribulose 5-phosphate + H(+) = (1S,2R)-1-C-(indol-3-yl)glycerol 3-phosphate + CO2 + H2O. Its pathway is amino-acid biosynthesis; L-tryptophan biosynthesis; L-tryptophan from chorismate: step 4/5. In Leptothrix cholodnii (strain ATCC 51168 / LMG 8142 / SP-6) (Leptothrix discophora (strain SP-6)), this protein is Indole-3-glycerol phosphate synthase.